The primary structure comprises 95 residues: Translation initiation factor IF-1 (95 aa).

Positions 1–72 (MAKEELIEMD…TKARITYRHK (72 aa)) constitute an S1-like domain. The interval 70–95 (RHKVGGPPGPVTGGGNRPPPRQPRRR) is disordered. The span at 86-95 (RPPPRQPRRR) shows a compositional bias: pro residues.

Belongs to the IF-1 family. In terms of assembly, component of the 30S ribosomal translation pre-initiation complex which assembles on the 30S ribosome in the order IF-2 and IF-3, IF-1 and N-formylmethionyl-tRNA(fMet); mRNA recruitment can occur at any time during PIC assembly.

The protein resides in the cytoplasm. One of the essential components for the initiation of protein synthesis. Stabilizes the binding of IF-2 and IF-3 on the 30S subunit to which N-formylmethionyl-tRNA(fMet) subsequently binds. Helps modulate mRNA selection, yielding the 30S pre-initiation complex (PIC). Upon addition of the 50S ribosomal subunit IF-1, IF-2 and IF-3 are released leaving the mature 70S translation initiation complex. In Rhodospirillum rubrum (strain ATCC 11170 / ATH 1.1.1 / DSM 467 / LMG 4362 / NCIMB 8255 / S1), this protein is Translation initiation factor IF-1.